A 514-amino-acid chain; its full sequence is 3-octaprenyl-4-hydroxybenzoate carboxy-lyase (514 aa).

Residue asparagine 177 participates in Mn(2+) binding. Prenylated FMN contacts are provided by residues 180–182 (IYR), 194–196 (RWL), and 199–200 (RG). A Mn(2+)-binding site is contributed by glutamate 243. The Proton donor role is filled by aspartate 314.

It belongs to the UbiD family. Homohexamer. The cofactor is prenylated FMN. It depends on Mn(2+) as a cofactor.

Its subcellular location is the cell membrane. The catalysed reaction is a 4-hydroxy-3-(all-trans-polyprenyl)benzoate + H(+) = a 2-(all-trans-polyprenyl)phenol + CO2. It participates in cofactor biosynthesis; ubiquinone biosynthesis. Catalyzes the decarboxylation of 3-octaprenyl-4-hydroxy benzoate to 2-octaprenylphenol, an intermediate step in ubiquinone biosynthesis. This is 3-octaprenyl-4-hydroxybenzoate carboxy-lyase from Bordetella pertussis (strain Tohama I / ATCC BAA-589 / NCTC 13251).